The primary structure comprises 364 residues: Probable tartrate dehydrogenase/decarboxylase TtuC (364 aa).

Aspartate 222, aspartate 246, and aspartate 250 together coordinate Mn(2+).

It belongs to the isocitrate and isopropylmalate dehydrogenases family. The cofactor is Mg(2+). Mn(2+) serves as cofactor. K(+) is required as a cofactor.

The protein resides in the cytoplasm. It carries out the reaction tartrate + NAD(+) = 2-hydroxy-3-oxosuccinate + NADH + H(+). The catalysed reaction is (2R,3S)-tartrate + NAD(+) = 2-hydroxy-3-oxosuccinate + NADH + H(+). The enzyme catalyses (2R,3R)-tartrate + NAD(+) = 2-hydroxy-3-oxosuccinate + NADH + H(+). It catalyses the reaction (2R,3R)-tartrate + H(+) = (R)-glycerate + CO2. It carries out the reaction (R)-malate + NAD(+) = pyruvate + CO2 + NADH. It participates in carbohydrate acid metabolism; tartrate degradation; 2-hydroxy-3-oxosuccinate from L-tartrate: step 1/1. Its pathway is carbohydrate acid metabolism; tartrate degradation; 2-hydroxy-3-oxosuccinate from meso-tartrate: step 1/1. It functions in the pathway carbohydrate acid metabolism; tartrate degradation; D-glycerate from L-tartrate: step 1/1. Functionally, has multiple catalytic activities. Apart from catalyzing the oxidation of (+)-tartrate to oxaloglycolate, also converts meso-tartrate to D-glycerate and catalyzes the oxidative decarboxylation of D-malate to pyruvate. The chain is Probable tartrate dehydrogenase/decarboxylase TtuC (ttuC) from Agrobacterium vitis (Rhizobium vitis).